The chain runs to 268 residues: Elongation factor Ts (268 aa).

The tract at residues 81 to 84 (TDFV) is involved in Mg(2+) ion dislocation from EF-Tu.

This sequence belongs to the EF-Ts family.

It localises to the cytoplasm. Associates with the EF-Tu.GDP complex and induces the exchange of GDP to GTP. It remains bound to the aminoacyl-tRNA.EF-Tu.GTP complex up to the GTP hydrolysis stage on the ribosome. In Buchnera aphidicola subsp. Acyrthosiphon pisum (strain 5A), this protein is Elongation factor Ts.